A 448-amino-acid chain; its full sequence is MSSHVSNNSILDPVTFWNQANKSLIRYGGDFAPKIIVRAKGCCVYDEQDNAILDFTSGQMSAILGHSHPDITACIEKNLPKLVHLFSGFLSPPVVQLATELSDLLPDGLDKTLFLSTGGEANEAALRMAKVYTNKYECVAFSSSWHGVTGGAASLTFAAARRGYGPALPGSYTIPEPNPKLSPFRDAKGNYDWQKELDYSFYMLDKQSTGSLACMIVETILSTGGIIELPQGYLKALKKKCEERGMLLIIDEAQTGIGRTGSMFSFEHHGIVPDILTLSKSLGAGTALAAVITSEEIEKVCYDNGFVFYTTHASDPLPAAIGSTVLKVVKRDNLVEKAKISGELLRSDLLRLKDKHPLIVDVRGLGLLQGIEIASCTDPSKPSDFLGTVIGDKCLELGMNCNIVHLRGIGGVFRIAPPLTVTDEEIHKAIEIFDSALTFTAKEFSGSY.

Position 280 is an N6-(pyridoxal phosphate)lysine (Lys-280).

Belongs to the class-III pyridoxal-phosphate-dependent aminotransferase family.

Its subcellular location is the cytoplasm. It localises to the mitochondrion. This is an uncharacterized protein from Schizosaccharomyces pombe (strain 972 / ATCC 24843) (Fission yeast).